A 525-amino-acid polypeptide reads, in one-letter code: GMP synthase [glutamine-hydrolyzing] (525 aa).

The region spanning 8-206 is the Glutamine amidotransferase type-1 domain; the sequence is PLLILDFGSQ…VVDICKASTD (199 aa). Residue C85 is the Nucleophile of the active site. Active-site residues include H180 and E182. The region spanning 207–400 is the GMPS ATP-PPase domain; sequence WTPEHIIDEA…LGLPHDMVYR (194 aa). An ATP-binding site is contributed by 234 to 240; sequence SGGVDSS.

As to quaternary structure, homodimer.

It catalyses the reaction XMP + L-glutamine + ATP + H2O = GMP + L-glutamate + AMP + diphosphate + 2 H(+). It participates in purine metabolism; GMP biosynthesis; GMP from XMP (L-Gln route): step 1/1. Functionally, catalyzes the synthesis of GMP from XMP. The chain is GMP synthase [glutamine-hydrolyzing] from Legionella pneumophila subsp. pneumophila (strain Philadelphia 1 / ATCC 33152 / DSM 7513).